The following is a 192-amino-acid chain: Putative metal-sulfur cluster biosynthesis proteins YuaD (192 aa).

The MOSC domain maps to Ala15 to His179.

This is Putative metal-sulfur cluster biosynthesis proteins YuaD (yuaD) from Bacillus subtilis (strain 168).